We begin with the raw amino-acid sequence, 114 residues long: TYRO protein tyrosine kinase-binding protein (114 aa).

A signal peptide spans 1–27 (MGAPEPSWCFLFLPVLLTVGGLSPVQA). Topologically, residues 28-42 (QSDNYPGCECSSVSP) are extracellular. Residues 43-63 (GVLAGIVLGDLVLTLLIALAV) traverse the membrane as a helical segment. A Ca(2+)-binding site is contributed by D52. Over 64-114 (YSLGRLVSRGRGTADGTRKQHMAETESPYQELQGQRPEVYSDLNTQRQYYR) the chain is Cytoplasmic. A disordered region spans residues 72–114 (RGRGTADGTRKQHMAETESPYQELQGQRPEVYSDLNTQRQYYR). The 29-residue stretch at 81–109 (RKQHMAETESPYQELQGQRPEVYSDLNTQ) folds into the ITAM domain. 2 positions are modified to phosphotyrosine: Y92 and Y103. Positions 105-114 (DLNTQRQYYR) are enriched in polar residues.

The protein belongs to the TYROBP family. As to quaternary structure, homodimer; disulfide-linked. Homotrimer; disulfide-linked. Homotetramer; disulfide-linked. Homotrimers and homotetramers form when low levels of partner receptors are available and is competitive with assembly with interacting receptors. They may represent alternative oligomerization states or may be intermediates in the receptor assembly process. Binding of a metal cation aids in homooligomerization through coordination of the metal ion by the subunits of the oligomer. Interacts with TREM1. Interacts with TREM2. Interacts with CLECSF5. Interacts with CD300LB and CD300C2. Interacts with CD300E. Interacts (via ITAM domain) with SYK (via SH2 domains); activates SYK mediating neutrophils and macrophages integrin-mediated activation. Interacts with KLRC2. Interacts with CD300H. Interacts with KLRD1. Interacts with SIGLEC1. Post-translationally, following ligand binding by associated receptors, tyrosine phosphorylated in the ITAM domain which leads to activation of additional tyrosine kinases and subsequent cell activation.

The protein localises to the cell membrane. Its function is as follows. Adapter protein which non-covalently associates with activating receptors found on the surface of a variety of immune cells to mediate signaling and cell activation following ligand binding by the receptors. TYROBP is tyrosine-phosphorylated in the ITAM domain following ligand binding by the associated receptors which leads to activation of additional tyrosine kinases and subsequent cell activation. Also has an inhibitory role in some cells. Non-covalently associates with activating receptors of the CD300 family to mediate cell activation. Also mediates cell activation through association with activating receptors of the CD200R family. Required for neutrophil activation mediated by integrin. Required for the activation of myeloid cells mediated by the CLEC5A/MDL1 receptor. Associates with natural killer (NK) cell receptors such as the KLRD1/KLRC2 heterodimer to mediate NK cell activation. Associates with TREM1 to mediate activation of neutrophils and monocytes. Associates with TREM2 on monocyte-derived dendritic cells to mediate up-regulation of chemokine receptor CCR7 and dendritic cell maturation and survival. PAssociation with TREM2 mediates cytokine-induced formation of multinucleated giant cells which are formed by the fusion of macrophages. Stabilizes the TREM2 C-terminal fragment (TREM2-CTF) produced by TREM2 ectodomain shedding which suppresses the release of pro-inflammatory cytokines. In microglia, required with TREM2 for phagocytosis of apoptotic neurons. Required with ITGAM/CD11B in microglia to control production of microglial superoxide ions which promote the neuronal apoptosis that occurs during brain development. Promotes pro-inflammatory responses in microglia following nerve injury which accelerates degeneration of injured neurons. ositively regulates the expression of the IRAK3/IRAK-M kinase and IL10 production by liver dendritic cells and inhibits their T cell allosimulatory ability. Negatively regulates B cell proliferation. Required for CSF1-mediated osteoclast cytoskeletal organization. Positively regulates multinucleation during osteoclast development. The polypeptide is TYRO protein tyrosine kinase-binding protein (Rattus norvegicus (Rat)).